Here is a 178-residue protein sequence, read N- to C-terminus: Ribosome maturation factor RimM (178 aa).

The region spanning K94–I174 is the PRC barrel domain.

Belongs to the RimM family. Binds ribosomal protein uS19.

It localises to the cytoplasm. Functionally, an accessory protein needed during the final step in the assembly of 30S ribosomal subunit, possibly for assembly of the head region. Essential for efficient processing of 16S rRNA. May be needed both before and after RbfA during the maturation of 16S rRNA. It has affinity for free ribosomal 30S subunits but not for 70S ribosomes. This chain is Ribosome maturation factor RimM, found in Aliarcobacter butzleri (strain RM4018) (Arcobacter butzleri).